The following is a 359-amino-acid chain: Heme A synthase (359 aa).

A run of 5 helical transmembrane segments spans residues 8-28, 94-114, 124-144, 159-179, and 215-235; these read IMSIWLIVSTLLLLLMIVVGG, LLGRITGIIIIIPFLIFYYLK, LLLITCLVIIQGFMGWYMVKS, GHLLLAVVIYHQLIAELLIII, and IIIFLLYTQIMFGALVAGLDA. Residue histidine 274 coordinates heme. A run of 3 helical transmembrane segments spans residues 276–296, 303–323, and 328–348; these read WFGILISCLIICYAIWLIILN, MGMVAACLVLVQVTTGIITLV, and ILAALTHQVGAILILTTFLFI. Position 334 (histidine 334) interacts with heme.

Belongs to the COX15/CtaA family. Type 2 subfamily. As to quaternary structure, interacts with CtaB. Heme b is required as a cofactor.

Its subcellular location is the cell membrane. The enzyme catalyses Fe(II)-heme o + 2 A + H2O = Fe(II)-heme a + 2 AH2. It functions in the pathway porphyrin-containing compound metabolism; heme A biosynthesis; heme A from heme O: step 1/1. In terms of biological role, catalyzes the conversion of heme O to heme A by two successive hydroxylations of the methyl group at C8. The first hydroxylation forms heme I, the second hydroxylation results in an unstable dihydroxymethyl group, which spontaneously dehydrates, resulting in the formyl group of heme A. This Orientia tsutsugamushi (strain Ikeda) (Rickettsia tsutsugamushi) protein is Heme A synthase.